Consider the following 288-residue polypeptide: uncharacterized protein (288 aa).

An HTH lysR-type domain is found at 1 to 59 (MDKLNAISIFCKVIETQSFTLAAKQQNISVAMASKLVSQLEEHLKTRLLQRTTRKIMPT). A DNA-binding region (H-T-H motif) is located at residues 19 to 38 (FTLAAKQQNISVAMASKLVS).

It belongs to the LysR transcriptional regulatory family.

This is an uncharacterized protein from Haemophilus influenzae (strain ATCC 51907 / DSM 11121 / KW20 / Rd).